The sequence spans 269 residues: L-cystine-binding protein TcyJ (269 aa).

A signal peptide spans 1–20 (MNKRKGLVLLLSVFALLGGG). A lipid anchor (N-palmitoyl cysteine) is attached at C21. A lipid anchor (S-diacylglycerol cysteine) is attached at C21.

The protein belongs to the bacterial solute-binding protein 3 family. As to quaternary structure, the complex is composed of two ATP-binding proteins (TcyN), two transmembrane proteins (TcyL and TcyM) and two solute-binding proteins (TcyJ and TcyK).

It is found in the cell membrane. Functionally, part of the ABC transporter complex TcyJKLMN involved in L-cystine import. Is also involved in cystathionine, djenkolate, and S-methylcysteine transport. The sequence is that of L-cystine-binding protein TcyJ (tcyJ) from Bacillus subtilis (strain 168).